We begin with the raw amino-acid sequence, 488 residues long: Mannosylglycerate hydrolase MGH1 (488 aa).

Substrate contacts are provided by residues Tyr94, 98-101 (WNWD), Tyr146, Gln167, and Gly227. Asp229 (proton donor) is an active-site residue. Residues Arg262 and 415–416 (YW) each bind substrate. Glu459 acts as the Proton acceptor in catalysis.

Belongs to the glycosyl hydrolase 63 family.

The enzyme catalyses (2R)-2-O-(alpha-D-mannosyl)-glycerate + H2O = D-mannose + (R)-glycerate. The catalysed reaction is (2R)-2-O-(alpha-D-glucopyranosyl)-glycerate + H2O = (R)-glycerate + D-glucose. With respect to regulation, activity is not dependent on divalent cations, but it is enhanced by Mn(2+). Its function is as follows. Catalyzes the hydrolysis of alpha-D-mannosyl-glycerate (MG) to D-glycerate and D-mannose. Can also hydrolyze alpha-D-glucopyranosyl-glycerate (GG)with lower efficiency. This chain is Mannosylglycerate hydrolase MGH1, found in Selaginella moellendorffii (Spikemoss).